The sequence spans 501 residues: ADP,ATP carrier protein 3 (501 aa).

The next 12 helical transmembrane spans lie at 23 to 43, 59 to 79, 90 to 110, 146 to 166, 183 to 203, 227 to 247, 293 to 313, 326 to 346, 361 to 381, 387 to 407, 446 to 466, and 470 to 490; these read LKLF…FGAL, IISF…TVLY, YIFY…AYII, YALM…LMFW, PVLG…LVFF, IMLQ…MLLF, IALL…PWKA, VNFM…FMII, LLTP…IIFI, CFGD…QNIL, FGKS…PTAT, and IIIY…WNVI.

It belongs to the ADP/ATP translocase tlc family.

The protein resides in the cell membrane. Provides the rickettsial cell with host ATP in exchange for rickettsial ADP. This is an obligate exchange system. This energy acquiring activity is an important component of rickettsial parasitism. The protein is ADP,ATP carrier protein 3 (tlcC) of Rickettsia conorii (strain ATCC VR-613 / Malish 7).